A 312-amino-acid chain; its full sequence is Beta-ketoacyl-[acyl-carrier-protein] synthase III (312 aa).

Residues cysteine 112 and histidine 237 contribute to the active site. Residues 238–242 (QANIR) are ACP-binding. Residue asparagine 267 is part of the active site.

The protein belongs to the thiolase-like superfamily. FabH family. As to quaternary structure, homodimer.

The protein resides in the cytoplasm. It catalyses the reaction malonyl-[ACP] + acetyl-CoA + H(+) = 3-oxobutanoyl-[ACP] + CO2 + CoA. Its pathway is lipid metabolism; fatty acid biosynthesis. Its function is as follows. Catalyzes the condensation reaction of fatty acid synthesis by the addition to an acyl acceptor of two carbons from malonyl-ACP. Catalyzes the first condensation reaction which initiates fatty acid synthesis and may therefore play a role in governing the total rate of fatty acid production. Possesses both acetoacetyl-ACP synthase and acetyl transacylase activities. Its substrate specificity determines the biosynthesis of branched-chain and/or straight-chain of fatty acids. The sequence is that of Beta-ketoacyl-[acyl-carrier-protein] synthase III from Oceanobacillus iheyensis (strain DSM 14371 / CIP 107618 / JCM 11309 / KCTC 3954 / HTE831).